The sequence spans 600 residues: Probable tripeptidyl-peptidase SED4 (600 aa).

An N-terminal signal peptide occupies residues 1-22; the sequence is MVSFTLRAIGACLIGLPALITA. The propeptide at 23–202 is removed in mature form; that stretch reads APTSHVSNGF…SVFTSDLEMT (180 aa). Residues asparagine 210 and asparagine 281 are each glycosylated (N-linked (GlcNAc...) asparagine). One can recognise a Peptidase S53 domain in the interval 212 to 600; the sequence is TITPDCIREL…FEKLSKLVLI (389 aa). Catalysis depends on charge relay system residues glutamate 288 and aspartate 292. Asparagine 323 and asparagine 404 each carry an N-linked (GlcNAc...) asparagine glycan. Serine 504 serves as the catalytic Charge relay system. Aspartate 546, isoleucine 547, glycine 579, and aspartate 581 together coordinate Ca(2+).

Ca(2+) is required as a cofactor.

It is found in the secreted. The protein localises to the extracellular space. The enzyme catalyses Release of an N-terminal tripeptide from a polypeptide.. In terms of biological role, secreted tripeptidyl-peptidase which degrades proteins at acidic pHs and is involved in virulence. The polypeptide is Probable tripeptidyl-peptidase SED4 (SED4) (Trichophyton verrucosum (strain HKI 0517)).